An 802-amino-acid chain; its full sequence is DEAD-box ATP-dependent RNA helicase 28 (802 aa).

The segment at M1–P179 is disordered. Acidic residues-rich tracts occupy residues G76 to E131 and K138 to E169. 2 coiled-coil regions span residues D90–V122 and Q149–S174. The short motif at N194–A222 is the Q motif element. The region spanning I225 to L399 is the Helicase ATP-binding domain. A238–T245 lines the ATP pocket. The short motif at D347–D350 is the DEAD box element. A Helicase C-terminal domain is found at V429–A573. The stretch at V572–K616 forms a coiled coil. The tract at residues K639–K802 is disordered. The segment covering S644–Q659 has biased composition (polar residues). Positions K666–R684 are enriched in basic residues. Residues R671 to K712 adopt a coiled-coil conformation. A compositionally biased stretch (acidic residues) spans M691 to A702. Over residues R776–K802 the composition is skewed to basic residues.

This sequence belongs to the DEAD box helicase family. DDX27/DRS1 subfamily.

The catalysed reaction is ATP + H2O = ADP + phosphate + H(+). The protein is DEAD-box ATP-dependent RNA helicase 28 of Oryza sativa subsp. japonica (Rice).